Consider the following 917-residue polypeptide: MIASHLLAYFFTELNHDQVQKVDQYLYHMRLSDETLLEISKRFRKEMEKGLGATTHPTAAVKMLPTFVRSTPDGTEHGEFLALDLGGTNFRVLWVKVTDNGLQKVEMENQIYAIPEDIMRGSGTQLFDHIAECLANFMDKLQIKDKKLPLGFTFSFPCHQTKLDESFLVSWTKGFKSSGVEGRDVVALIRKAIQRRGDFDIDIVAVVNDTVGTMMTCGYDDHNCEIGLIVGTGSNACYMEEMRHIDMVEGDEGRMCINMEWGAFGDDGSLNDIRTEFDQEIDMGSLNPGKQLFEKMISGMYMGELVRLILVKMAKEELLFGGKLSPELLNTGRFETKDISDIEGEKDGIRKAREVLMRLGLDPTQEDCVATHRICQIVSTRSASLCAATLAAVLQRIKENKGEERLRSTIGVDGSVYKKHPHFAKRLHKTVRRLVPGCDVRFLRSEDGSGKGAAMVTAVAYRLADQHRARQKTLEHLQLSHDQLLEVKRRMKVEMERGLSKETHASAPVKMLPTYVCATPDGTEKGDFLALDLGGTNFRVLLVRVRNGKWGGVEMHNKIYAIPQEVMHGTGDELFDHIVQCIADFLEYMGMKGVSLPLGFTFSFPCQQNSLDESILLKWTKGFKASGCEGEDVVTLLKEAIHRREEFDLDVVAVVNDTVGTMMTCGFEDPHCEVGLIVGTGSNACYMEEMRNVELVEGEEGRMCVNMEWGAFGDNGCLDDFRTEFDVAVDELSLNPGKQRFEKMISGMYLGEIVRNILIDFTKRGLLFRGRISERLKTRGIFETKFLSQIESDCLALLQVRAILQHLGLESTCDDSIIVKEVCTVVARRAAQLCGAGMAAVVDRIRENRGLDALKVTVGVDGTLYKLHPHFAKVMHETVKDLAPKCDVSFLQSEDGSGKGAALITAVACRIREAGQR.

At Met-1 the chain carries N-acetylmethionine. Residues 1 to 16 (MIASHLLAYFFTELNH) form a mitochondrial-binding peptide (MBP) region. Hexokinase domains are found at residues 16–458 (HDQV…MVTA) and 464–906 (ADQH…LITA). ATP is bound by residues Arg-30 and 84–89 (DLGGTN). The hexokinase small subdomain 1 stretch occupies residues 73 to 207 (DGTEHGEFLA…DFDIDIVAVV (135 aa)). D-glucose 6-phosphate is bound at residue 84–88 (DLGGT). D-glucose is bound by residues 155–156 (SF), 172–173 (TK), and 208–209 (ND). A hexokinase large subdomain 1 region spans residues 208-447 (NDTVGTMMTC…CDVRFLRSED (240 aa)). Residues Asp-209 and Thr-232 each contribute to the D-glucose 6-phosphate site. D-glucose contacts are provided by residues Asn-235, Glu-260, and 291–294 (QLFE). D-glucose 6-phosphate is bound at residue 413–415 (DGS). 425–426 (KR) is an ATP binding site. D-glucose 6-phosphate contacts are provided by residues Ser-449 and 532–536 (DLGGT). The segment at 521-655 (DGTEKGDFLA…EFDLDVVAVV (135 aa)) is hexokinase small subdomain 2. 532 to 537 (DLGGTN) is an ATP binding site. D-glucose contacts are provided by residues 603–604 (SF), 620–621 (TK), and 656–657 (ND). Positions 656–895 (NDTVGTMMTC…CDVSFLQSED (240 aa)) are hexokinase large subdomain 2. 2 residues coordinate D-glucose 6-phosphate: Asp-657 and Thr-680. Residue Thr-680 coordinates ATP. D-glucose is bound by residues 682-683 (SN), Glu-708, and 739-742 (QRFE). ATP-binding positions include 747–748 (GM), 784–788 (TKFLS), and 863–867 (TLYKL). Residues 861-863 (DGT) and Ser-897 each bind D-glucose 6-phosphate.

This sequence belongs to the hexokinase family. Monomer. Interacts with TIGAR; the interaction increases hexokinase activity in a hypoxia- and HIF1A-dependent manner. As to expression, predominant hexokinase isozyme expressed in insulin-responsive tissues such as skeletal muscle.

It localises to the mitochondrion outer membrane. Its subcellular location is the cytoplasm. The protein localises to the cytosol. It catalyses the reaction a D-hexose + ATP = a D-hexose 6-phosphate + ADP + H(+). It carries out the reaction D-fructose + ATP = D-fructose 6-phosphate + ADP + H(+). The enzyme catalyses D-glucose + ATP = D-glucose 6-phosphate + ADP + H(+). It participates in carbohydrate metabolism; hexose metabolism. It functions in the pathway carbohydrate degradation; glycolysis; D-glyceraldehyde 3-phosphate and glycerone phosphate from D-glucose: step 1/4. Hexokinase activity is specifically inhibited by 2,6-disubstituted glucosamines. Functionally, catalyzes the phosphorylation of hexose, such as D-glucose and D-fructose, to hexose 6-phosphate (D-glucose 6-phosphate and D-fructose 6-phosphate, respectively). Mediates the initial step of glycolysis by catalyzing phosphorylation of D-glucose to D-glucose 6-phosphate. Plays a key role in maintaining the integrity of the outer mitochondrial membrane by preventing the release of apoptogenic molecules from the intermembrane space and subsequent apoptosis. The polypeptide is Hexokinase-2 (Homo sapiens (Human)).